A 124-amino-acid polypeptide reads, in one-letter code: Small ribosomal subunit protein uS12 (124 aa).

The tract at residues 1–24 is disordered; the sequence is MPTINQLVRRPRKPSVSANKAPAL. At Asp-90 the chain carries 3-methylthioaspartic acid.

The protein belongs to the universal ribosomal protein uS12 family. As to quaternary structure, part of the 30S ribosomal subunit. Contacts proteins S8 and S17. May interact with IF1 in the 30S initiation complex.

Its function is as follows. With S4 and S5 plays an important role in translational accuracy. Interacts with and stabilizes bases of the 16S rRNA that are involved in tRNA selection in the A site and with the mRNA backbone. Located at the interface of the 30S and 50S subunits, it traverses the body of the 30S subunit contacting proteins on the other side and probably holding the rRNA structure together. The combined cluster of proteins S8, S12 and S17 appears to hold together the shoulder and platform of the 30S subunit. This is Small ribosomal subunit protein uS12 from Anaplasma phagocytophilum (strain HZ).